The following is a 2948-amino-acid chain: Transforming acidic coiled-coil-containing protein 2 (2948 aa).

A compositionally biased stretch (polar residues) spans 1-30 (MGNENSTSDNQRTLSAQTPRSAQPPGNSQN). Disordered regions lie at residues 1 to 304 (MGNE…TDDL), 314 to 333 (RSNS…QESC), 392 to 453 (AAGG…MPVS), 465 to 785 (LVGL…PQGE), 825 to 964 (SSEK…VSPP), 985 to 1050 (CTGQ…QPDS), 1062 to 1154 (ALAP…GEAT), 1243 to 1274 (AAQR…VGEP), 1296 to 1400 (QPGA…EQIA), 1427 to 1463 (PGEK…VTLL), 1493 to 1661 (ASDK…GERR), 1675 to 1705 (LGNQ…AGEA), 1741 to 1878 (VLPG…ESPT), 1907 to 2035 (HAGL…SSGT), and 2052 to 2460 (LEPR…ETPP). A compositionally biased stretch (basic and acidic residues) spans 174–184 (GRERQPKEEGQ). 3 positions are modified to phosphoserine: Ser197, Ser201, and Ser269. A Phosphothreonine modification is found at Val325. Ser493 carries the phosphoserine modification. The span at 496–507 (ERGEHLNTEQSH) shows a compositional bias: basic and acidic residues. Ser561, Ser571, and Ser575 each carry phosphoserine. Positions 604 to 629 (SKRDPEVGKDELSKPSSDAESRDHPS) are enriched in basic and acidic residues. Ser758 carries the post-translational modification Phosphoserine. Residues 911 to 926 (SDTPTSSPTDMVWESS) show a composition bias toward low complexity. Residue Ser962 is modified to Phosphoserine. A compositionally biased stretch (polar residues) spans 985–996 (CTGQGPNKSQQA). The residue at position 1025 (Ser1025) is a Phosphoserine. A phosphoserine mark is found at Ser1267 and Ser1313. Residues 1348-1357 (ATAPGAGAKA) are compositionally biased toward low complexity. Residues 1383–1400 (DPKQGTSGGVDTSSEQIA) show a composition bias toward polar residues. Ser1562 bears the Phosphoserine mark. Basic and acidic residues-rich tracts occupy residues 1801-1823 (DETH…RESP) and 1834-1854 (PKKD…RGAE). Positions 1862 to 1873 (ADDIIQPAAPAD) are enriched in low complexity. Basic and acidic residues predominate over residues 1939 to 1948 (PAKDLSRSSD). Over residues 1963–1976 (KAPPAPPPPPPEVI) the composition is skewed to pro residues. Residue Ser2072 is modified to Phosphoserine. Positions 2074–2102 (DSVPISKSTLSRSLSLQASDFDGASSSGN) are enriched in polar residues. Positions 2114-2124 (STGSSSASSTL) are enriched in low complexity. Residues 2125–2141 (KRTKKPRPPSLKKKQTT) show a composition bias toward basic residues. Residues Ser2161 and Ser2226 each carry the phosphoserine modification. Thr2246 carries the phosphothreonine modification. Ser2256 is subject to Phosphoserine. The span at 2265-2275 (LEFDYSEDKSS) shows a compositional bias: basic and acidic residues. Basic residues predominate over residues 2288–2305 (KIGKKPVAKMPLRRPKMK). Residues 2315-2403 (PASPPRSPAE…SPASFEIPAS (89 aa)) enclose the SPAZ domain. 7 positions are modified to phosphoserine: Ser2317, Ser2321, Ser2359, Ser2389, Ser2392, Ser2394, and Ser2403. Positions 2348-2368 (NPFSSTSKMQESPKLPQQSYN) are enriched in polar residues. The span at 2382-2395 (KTSSKTPSSPSKSP) shows a compositional bias: low complexity. Phosphothreonine is present on residues Thr2430, Thr2451, Thr2455, and Thr2458. Ser2512 and Ser2534 each carry phosphoserine. Residue Thr2553 is modified to Phosphothreonine. A disordered region spans residues 2555-2577 (QESPVKSSPVRMSESPTPCSGSS). Phosphoserine is present on residues Ser2557 and Ser2569. The segment covering 2568–2577 (ESPTPCSGSS) has biased composition (polar residues). Thr2625 carries the phosphothreonine modification. 2 coiled-coil regions span residues 2675 to 2703 (AQKL…LASR) and 2746 to 2947 (DLDS…KMGK).

This sequence belongs to the TACC family. As to quaternary structure, interacts with CCDC100/CEP120. Interacts with microtubules. Interacts with YEATS4, GCN5L2 and PCAF. Phosphorylated by TTK; which is required for localization in centrosome. In terms of tissue distribution, strongly expressed in heart, skeletal muscle, brain, prostate, thyroid and trachea.

The protein localises to the cytoplasm. It localises to the nucleus. Its subcellular location is the cytoskeleton. The protein resides in the microtubule organizing center. It is found in the centrosome. Functionally, plays a role in the microtubule-dependent coupling of the nucleus and the centrosome. Involved in the processes that regulate centrosome-mediated interkinetic nuclear migration (INM) of neural progenitors. May play a role in organizing centrosomal microtubules. May act as a tumor suppressor protein. May represent a tumor progression marker. The sequence is that of Transforming acidic coiled-coil-containing protein 2 (TACC2) from Homo sapiens (Human).